A 539-amino-acid polypeptide reads, in one-letter code: MKVTTEKKPRSILELTVELDKQQIEKALDRAARRMSQKYNIPGFRKGKAPRFIVENYFGREALLEEASDDLIQKAFQDALKQEGIEPYAQAHLTDVNLTEAPYRFTVEVPVAPTVVLPDYRAIHVPLEIEEVTDETVNHAMEIRRDRHVVLRALDEPRPAQPGDQLTVQIETFVDGEPLNPRAEGEDIPQSTLVLDPERIVPGLYEALVGVSPNTMVDVTVRMSDDHENERVRGRDVRFVVNVLDVQERLLPEWDELPALENFEGTLDELREKTRNELIEAARKNAEDDVFVEYVRQVIAATTFDLPDALIVREADSILREREAEFERYGISAEQIYAAQGKKRDDLIEELKPVAEERAKRGLVLREIAKAEGLAPDESEIAREVEDIVASMEEERRDSARTLLETELRPFVVAGIVDRKLRRRILAIATGDPSFEQAASPEAASEPESADGGEAQTVDTHIDSAPVDDVSTKQAASPEAASEPESADGGEAQTVDTHINSAPVDDVSTETPIVSQEENGESVENQSVVDVATPEARTE.

A PPIase FKBP-type domain is found at 163–252; it reads GDQLTVQIET…VLDVQERLLP (90 aa). Low complexity-rich tracts occupy residues 434–447 and 475–484; these read SFEQ…ASEP and AASPEAASEP. A disordered region spans residues 434-539; the sequence is SFEQAASPEA…DVATPEARTE (106 aa). Residues 509–528 show a composition bias toward polar residues; that stretch reads TETPIVSQEENGESVENQSV.

The protein belongs to the FKBP-type PPIase family. Tig subfamily.

The protein resides in the cytoplasm. It carries out the reaction [protein]-peptidylproline (omega=180) = [protein]-peptidylproline (omega=0). Functionally, involved in protein export. Acts as a chaperone by maintaining the newly synthesized protein in an open conformation. Functions as a peptidyl-prolyl cis-trans isomerase. In Roseiflexus sp. (strain RS-1), this protein is Trigger factor.